The following is a 111-amino-acid chain: Large ribosomal subunit protein uL23 (111 aa).

It belongs to the universal ribosomal protein uL23 family. As to quaternary structure, part of the 50S ribosomal subunit. Contacts protein L29, and trigger factor when it is bound to the ribosome.

Its function is as follows. One of the early assembly proteins it binds 23S rRNA. One of the proteins that surrounds the polypeptide exit tunnel on the outside of the ribosome. Forms the main docking site for trigger factor binding to the ribosome. The polypeptide is Large ribosomal subunit protein uL23 (Chlamydia felis (strain Fe/C-56) (Chlamydophila felis)).